Here is a 660-residue protein sequence, read N- to C-terminus: tRNA 5-methylaminomethyl-2-thiouridine biosynthesis bifunctional protein MnmC (660 aa).

Residues 1-235 are tRNA (mnm(5)s(2)U34)-methyltransferase; it reads MTITRHARID…KWEVLRGAFI (235 aa). The segment at 266-660 is FAD-dependent cmnm(5)s(2)U34 oxidoreductase; the sequence is IGAGLAGCAT…LRGLIRGGGK (395 aa).

It in the N-terminal section; belongs to the methyltransferase superfamily. tRNA (mnm(5)s(2)U34)-methyltransferase family. This sequence in the C-terminal section; belongs to the DAO family. FAD is required as a cofactor.

The protein localises to the cytoplasm. The catalysed reaction is 5-aminomethyl-2-thiouridine(34) in tRNA + S-adenosyl-L-methionine = 5-methylaminomethyl-2-thiouridine(34) in tRNA + S-adenosyl-L-homocysteine + H(+). In terms of biological role, catalyzes the last two steps in the biosynthesis of 5-methylaminomethyl-2-thiouridine (mnm(5)s(2)U) at the wobble position (U34) in tRNA. Catalyzes the FAD-dependent demodification of cmnm(5)s(2)U34 to nm(5)s(2)U34, followed by the transfer of a methyl group from S-adenosyl-L-methionine to nm(5)s(2)U34, to form mnm(5)s(2)U34. This chain is tRNA 5-methylaminomethyl-2-thiouridine biosynthesis bifunctional protein MnmC, found in Pseudomonas syringae pv. tomato (strain ATCC BAA-871 / DC3000).